The following is a 173-amino-acid chain: Cell division protein SepF (173 aa).

Residues 17–85 form a disordered region; that stretch reads SDDEYISDET…NELRTITTVH (69 aa). Over residues 35-52 the composition is skewed to low complexity; the sequence is SAGGSSAAVSESGSTSVA.

The protein belongs to the SepF family. Homodimer. Interacts with FtsZ.

It is found in the cytoplasm. In terms of biological role, cell division protein that is part of the divisome complex and is recruited early to the Z-ring. Probably stimulates Z-ring formation, perhaps through the cross-linking of FtsZ protofilaments. Its function overlaps with FtsA. This chain is Cell division protein SepF, found in Kocuria rhizophila (strain ATCC 9341 / DSM 348 / NBRC 103217 / DC2201).